Reading from the N-terminus, the 593-residue chain is uncharacterized protein (593 aa).

12 consecutive transmembrane segments (helical) span residues 21-41, 60-80, 97-117, 148-168, 204-224, 243-263, 275-295, 328-348, 359-379, 410-430, 457-477, and 485-505; these read PAVFIPASVVIVAMIVVSVVY, VGWWYILVATGFVVFALYCGI, FSFWAWLAMLFSAGMGIGLVF, MALTVFHWGLHAWAIYVVVGL, VDVIAIVGTLFGVATSLGFGI, WMVGMIAAITATATASVVSGV, MALAAALALFVLLLGPTLFLL, WTIFYWGWWISWAPFVGMFIA, FIGAVLLVPTVIASLWFTIFG, GLPIGAITSVLAVLVIVFFFV, VYWAVLEGVAAAVLLLIGGAG, and AAIATALPFSIVMVVACYAMT.

It belongs to the BCCT transporter (TC 2.A.15) family.

The protein localises to the cell membrane. This is an uncharacterized protein from Mycobacterium tuberculosis (strain CDC 1551 / Oshkosh).